A 171-amino-acid chain; its full sequence is Glycine cleavage system H protein 4 (171 aa).

One can recognise a Lipoyl-binding domain in the interval 30 to 112 (FAEVGITDYA…YEAGWIAVIE (83 aa)). Lys71 carries the post-translational modification N6-lipoyllysine. Residues 139–171 (EKEEEVEVKEEELIETESIEELSEEELGYEENK) are disordered.

The protein belongs to the GcvH family. The glycine cleavage system is composed of four proteins: P, T, L and H. Requires (R)-lipoate as cofactor.

The glycine cleavage system catalyzes the degradation of glycine. The H protein shuttles the methylamine group of glycine from the P protein to the T protein. The polypeptide is Glycine cleavage system H protein 4 (Aquifex aeolicus (strain VF5)).